A 352-amino-acid chain; its full sequence is Heat-inducible transcription repressor HrcA (352 aa).

Belongs to the HrcA family.

Functionally, negative regulator of class I heat shock genes (grpE-dnaK-dnaJ and groELS operons). Prevents heat-shock induction of these operons. In Lactobacillus gasseri (strain ATCC 33323 / DSM 20243 / BCRC 14619 / CIP 102991 / JCM 1131 / KCTC 3163 / NCIMB 11718 / NCTC 13722 / AM63), this protein is Heat-inducible transcription repressor HrcA.